Consider the following 654-residue polypeptide: DNA ligase (654 aa).

NAD(+) is bound by residues 34–38 (DLEYD), 83–84 (SL), and glutamate 114. Residue lysine 116 is the N6-AMP-lysine intermediate of the active site. The NAD(+) site is built by arginine 137, glutamate 171, lysine 280, and lysine 304. Zn(2+) is bound by residues cysteine 396, cysteine 399, cysteine 414, and cysteine 419. The BRCT domain maps to 577–654 (VISTILSGYT…EEQFYDLIKQ (78 aa)).

It belongs to the NAD-dependent DNA ligase family. LigA subfamily. The cofactor is Mg(2+). It depends on Mn(2+) as a cofactor.

The catalysed reaction is NAD(+) + (deoxyribonucleotide)n-3'-hydroxyl + 5'-phospho-(deoxyribonucleotide)m = (deoxyribonucleotide)n+m + AMP + beta-nicotinamide D-nucleotide.. DNA ligase that catalyzes the formation of phosphodiester linkages between 5'-phosphoryl and 3'-hydroxyl groups in double-stranded DNA using NAD as a coenzyme and as the energy source for the reaction. It is essential for DNA replication and repair of damaged DNA. This Mycoplasmopsis agalactiae (strain NCTC 10123 / CIP 59.7 / PG2) (Mycoplasma agalactiae) protein is DNA ligase.